Reading from the N-terminus, the 124-residue chain is Conotoxin Cl14.12 (124 aa).

Positions 1 to 17 (MKVAVVLLVSLLAVTYA) are cleaved as a signal peptide. A propeptide spanning residues 18–74 (LPEKRIFFGGIVDKVKDTFTKIFNKAKETFDKITDGFDVDFDEVVDKLIAQIHSTPT) is cleaved from the precursor.

Contains 2 disulfide bond. In terms of tissue distribution, expressed by the venom duct.

Its subcellular location is the secreted. The protein is Conotoxin Cl14.12 of Californiconus californicus (California cone).